Consider the following 970-residue polypeptide: Protein bicaudal C homolog 1-B (970 aa).

The tract at residues 1-50 (MAAQCGGYMNQSDPGSNSERSADSPLPGSEDDSPGSAAPHDPEWREERFR) is disordered. Over residues 9 to 19 (MNQSDPGSNSE) the composition is skewed to polar residues. The span at 40–50 (HDPEWREERFR) shows a compositional bias: basic and acidic residues. KH domains lie at 130–197 (RVTL…RVRI) and 282–346 (PVST…RQYL). Polar residues predominate over residues 596–605 (EASRQSNNHS). 3 disordered regions span residues 596–638 (EASR…SANT), 677–696 (SDSE…APGS), and 773–841 (RRAN…NKSA). Residues 606–616 (SAEEVNSKTDS) show a composition bias toward basic and acidic residues. Polar residues-rich tracts occupy residues 783–810 (TMST…GSDS) and 819–831 (IDSS…SSIG). An SAM domain is found at 869–932 (FKGSDLPELF…LLAISELNKN (64 aa)).

Belongs to the BicC family.

In terms of biological role, putative RNA-binding protein. May be involved in regulating gene expression during embryonic development. Seems to be involved in endoderm formation. Ectopic expression results in endoderm formation in the absence of mesoderm induction. The sequence is that of Protein bicaudal C homolog 1-B (bicc1-b) from Xenopus laevis (African clawed frog).